The following is a 264-amino-acid chain: Diphthine synthase (264 aa).

S-adenosyl-L-methionine-binding positions include Leu10, Asp87, Val90, 115 to 116, Leu166, Ala209, and His234; that span reads SI.

Belongs to the diphthine synthase family. As to quaternary structure, homodimer.

The enzyme catalyses 2-[(3S)-amino-3-carboxypropyl]-L-histidyl-[translation elongation factor 2] + 3 S-adenosyl-L-methionine = diphthine-[translation elongation factor 2] + 3 S-adenosyl-L-homocysteine + 3 H(+). The protein operates within protein modification; peptidyl-diphthamide biosynthesis. S-adenosyl-L-methionine-dependent methyltransferase that catalyzes the trimethylation of the amino group of the modified target histidine residue in translation elongation factor 2 (EF-2), to form an intermediate called diphthine. The three successive methylation reactions represent the second step of diphthamide biosynthesis. The polypeptide is Diphthine synthase (Thermococcus kodakarensis (strain ATCC BAA-918 / JCM 12380 / KOD1) (Pyrococcus kodakaraensis (strain KOD1))).